Consider the following 426-residue polypeptide: Serine--tRNA ligase (426 aa).

233–235 (TSE) contacts L-serine. Residue 264 to 266 (RAE) participates in ATP binding. Glu287 is an L-serine binding site. ATP is bound at residue 351-354 (EISS). Ser387 contributes to the L-serine binding site.

Belongs to the class-II aminoacyl-tRNA synthetase family. Type-1 seryl-tRNA synthetase subfamily. In terms of assembly, homodimer. The tRNA molecule binds across the dimer.

Its subcellular location is the cytoplasm. The enzyme catalyses tRNA(Ser) + L-serine + ATP = L-seryl-tRNA(Ser) + AMP + diphosphate + H(+). It catalyses the reaction tRNA(Sec) + L-serine + ATP = L-seryl-tRNA(Sec) + AMP + diphosphate + H(+). The protein operates within aminoacyl-tRNA biosynthesis; selenocysteinyl-tRNA(Sec) biosynthesis; L-seryl-tRNA(Sec) from L-serine and tRNA(Sec): step 1/1. In terms of biological role, catalyzes the attachment of serine to tRNA(Ser). Is also able to aminoacylate tRNA(Sec) with serine, to form the misacylated tRNA L-seryl-tRNA(Sec), which will be further converted into selenocysteinyl-tRNA(Sec). The sequence is that of Serine--tRNA ligase from Stenotrophomonas maltophilia (strain K279a).